The sequence spans 397 residues: ATP-dependent RNA helicase eIF4A (397 aa).

Positions 23-51 (YTFDDLNLKPNIVRGIFGYGYESPSAIQQ) match the Q motif motif. The Helicase ATP-binding domain maps to 54–224 (ILPITEGRDV…TKFMNNPVRI (171 aa)). Residue 67 to 74 (AQSGTGKT) coordinates ATP. Positions 172–175 (DEAD) match the DEAD box motif. Residues 235-396 (GIKQFYINVE…EMPADIGALF (162 aa)) form the Helicase C-terminal domain.

Belongs to the DEAD box helicase family. eIF4A subfamily. In terms of assembly, component of the eIF4F complex, which composition varies with external and internal environmental conditions. It is composed of at least eIF4A, eIF4E and eIF4G.

It localises to the cytoplasm. It carries out the reaction ATP + H2O = ADP + phosphate + H(+). In terms of biological role, ATP-dependent RNA helicase which is a subunit of the eIF4F complex involved in cap recognition and is required for mRNA binding to ribosome. In the current model of translation initiation, eIF4A unwinds RNA secondary structures in the 5'-UTR of mRNAs which is necessary to allow efficient binding of the small ribosomal subunit, and subsequent scanning for the initiator codon. The polypeptide is ATP-dependent RNA helicase eIF4A (TIF1) (Debaryomyces hansenii (strain ATCC 36239 / CBS 767 / BCRC 21394 / JCM 1990 / NBRC 0083 / IGC 2968) (Yeast)).